The primary structure comprises 331 residues: Ketol-acid reductoisomerase (NADP(+)) (331 aa).

Positions Ala-2–Thr-182 constitute a KARI N-terminal Rossmann domain. NADP(+) is bound by residues Tyr-25–Gln-28, Ser-51, Ser-53, and Asp-83–Gln-86. The active site involves His-108. Gly-134 provides a ligand contact to NADP(+). The region spanning Asn-183–Leu-328 is the KARI C-terminal knotted domain. Mg(2+)-binding residues include Asp-191, Glu-195, Glu-227, and Glu-231. Ser-252 contributes to the substrate binding site.

Belongs to the ketol-acid reductoisomerase family. Requires Mg(2+) as cofactor.

It catalyses the reaction (2R)-2,3-dihydroxy-3-methylbutanoate + NADP(+) = (2S)-2-acetolactate + NADPH + H(+). The enzyme catalyses (2R,3R)-2,3-dihydroxy-3-methylpentanoate + NADP(+) = (S)-2-ethyl-2-hydroxy-3-oxobutanoate + NADPH + H(+). It participates in amino-acid biosynthesis; L-isoleucine biosynthesis; L-isoleucine from 2-oxobutanoate: step 2/4. Its pathway is amino-acid biosynthesis; L-valine biosynthesis; L-valine from pyruvate: step 2/4. Functionally, involved in the biosynthesis of branched-chain amino acids (BCAA). Catalyzes an alkyl-migration followed by a ketol-acid reduction of (S)-2-acetolactate (S2AL) to yield (R)-2,3-dihydroxy-isovalerate. In the isomerase reaction, S2AL is rearranged via a Mg-dependent methyl migration to produce 3-hydroxy-3-methyl-2-ketobutyrate (HMKB). In the reductase reaction, this 2-ketoacid undergoes a metal-dependent reduction by NADPH to yield (R)-2,3-dihydroxy-isovalerate. This is Ketol-acid reductoisomerase (NADP(+)) from Synechococcus sp. (strain WH7803).